The following is a 99-amino-acid chain: Large ribosomal subunit protein uL23 (99 aa).

The protein belongs to the universal ribosomal protein uL23 family. In terms of assembly, part of the 50S ribosomal subunit. Contacts protein L29, and trigger factor when it is bound to the ribosome.

In terms of biological role, one of the early assembly proteins it binds 23S rRNA. One of the proteins that surrounds the polypeptide exit tunnel on the outside of the ribosome. Forms the main docking site for trigger factor binding to the ribosome. This is Large ribosomal subunit protein uL23 from Hydrogenobaculum sp. (strain Y04AAS1).